Reading from the N-terminus, the 250-residue chain is Testis-expressed protein 101 (250 aa).

The signal sequence occupies residues 1 to 25 (MGACRIQYVLLIFLLIASRWTLVQN). N-linked (GlcNAc...) asparagine glycosylation is found at Asn45, Asn110, Asn134, and Asn160. Positions 141 to 215 (CPTCVALGSC…VKETCSYQSF (75 aa)) constitute a UPAR/Ly6 domain. Gly224 carries GPI-anchor amidated glycine lipidation. The propeptide at 225–250 (ASQMPTSLWVLELLFPLLLLPLTHFP) is removed in mature form.

In terms of assembly, interacts with VAMP3. Interacts with LY6K. Interacts with DPEP3; co-localized on the cell surface of spermatocytes, spermatids, and testicular spermatozoa, co-localized only in cytoplasmic droplets of caput and corpus epididymal sperm. Interacts with ADAM3; co-localized on sperm surface. Interacts with ADAM5. In terms of processing, N-glycosylated; by high mannose and/or biantennary complex and/or certain types of hybrid oligosaccharides; possesses different oligosaccharides chains according to its subcellular localization in the testis. Sheds from membrane raft by ACE and released from the cell surface of epididymal sperm while it passes through the caput epididymis leading to disappearance of TEX101 on spermatozoa; is essential to produce fertile spermatozoa. Detected in testis and ovary. Expressed in spermatocytes, spermatids and testicular spermatozoa, but not in spermatogonia or interstitial cells. Expressed abundantly in testicular germ cells (TGCs) but mostly disappeared from epididymal spermatozoa.

Its subcellular location is the cell membrane. It is found in the membrane raft. The protein localises to the cytoplasmic vesicle. The protein resides in the secretory vesicle. It localises to the acrosome. Its subcellular location is the secreted. In terms of biological role, plays a role in fertilization by controlling binding of sperm to zona pellucida and migration of spermatozoa into the oviduct probably through molecule adhesion ADAM3. May play a role in signal transduction and promote protein tyrosine phosphorylation. The chain is Testis-expressed protein 101 from Mus musculus (Mouse).